Reading from the N-terminus, the 417-residue chain is Proteasome-activating nucleotidase (417 aa).

Positions 24–78 form a coiled coil; sequence SKYLLDRVKQLEERNVRLKEEYRKIELEKKSVENKKVQYEREIRKLTSELDRLKT. ATP is bound by residues 203–208 and histidine 342; that span reads GTGKTL. A docks into pockets in the proteasome alpha-ring to cause gate opening region spans residues 415–417; sequence MFA.

Belongs to the AAA ATPase family. In terms of assembly, homohexamer. The hexameric complex has a two-ring architecture resembling a top hat that caps the 20S proteasome core at one or both ends. Upon ATP-binding, the C-terminus of PAN interacts with the alpha-rings of the proteasome core by binding to the intersubunit pockets.

The protein localises to the cytoplasm. ATPase which is responsible for recognizing, binding, unfolding and translocation of substrate proteins into the archaeal 20S proteasome core particle. Is essential for opening the gate of the 20S proteasome via an interaction with its C-terminus, thereby allowing substrate entry and access to the site of proteolysis. Thus, the C-termini of the proteasomal ATPase function like a 'key in a lock' to induce gate opening and therefore regulate proteolysis. Unfolding activity requires energy from ATP hydrolysis, whereas ATP binding alone promotes ATPase-20S proteasome association which triggers gate opening, and supports translocation of unfolded substrates. The chain is Proteasome-activating nucleotidase from Methanocella arvoryzae (strain DSM 22066 / NBRC 105507 / MRE50).